We begin with the raw amino-acid sequence, 410 residues long: Squalene synthase 1 (410 aa).

At Gly-2 the chain carries N-acetylglycine. The next 2 membrane-spanning stretches (helical) occupy residues 283–303 (SIFR…ALCY) and 387–407 (QPNS…FAYL).

It belongs to the phytoene/squalene synthase family. Mg(2+) serves as cofactor. The cofactor is Mn(2+). In terms of tissue distribution, expressed in all tissues analyzed (seedlings, cotyledons, inflorescences, siliques, leaves, stems and roots). Highly expressed in roots and pollen.

The protein localises to the endoplasmic reticulum membrane. The enzyme catalyses 2 (2E,6E)-farnesyl diphosphate + NADPH + H(+) = squalene + 2 diphosphate + NADP(+). It catalyses the reaction 2 (2E,6E)-farnesyl diphosphate + NADH + H(+) = squalene + 2 diphosphate + NAD(+). The protein operates within terpene metabolism; lanosterol biosynthesis; lanosterol from farnesyl diphosphate: step 1/3. This is Squalene synthase 1 from Arabidopsis thaliana (Mouse-ear cress).